Reading from the N-terminus, the 190-residue chain is Xanthine phosphoribosyltransferase (190 aa).

Xanthine-binding residues include leucine 20 and asparagine 27. 128–132 (ANGKA) contacts 5-phospho-alpha-D-ribose 1-diphosphate. A xanthine-binding site is contributed by lysine 156.

The protein belongs to the purine/pyrimidine phosphoribosyltransferase family. Xpt subfamily. As to quaternary structure, homodimer.

It is found in the cytoplasm. It catalyses the reaction XMP + diphosphate = xanthine + 5-phospho-alpha-D-ribose 1-diphosphate. It participates in purine metabolism; XMP biosynthesis via salvage pathway; XMP from xanthine: step 1/1. Its function is as follows. Converts the preformed base xanthine, a product of nucleic acid breakdown, to xanthosine 5'-monophosphate (XMP), so it can be reused for RNA or DNA synthesis. This is Xanthine phosphoribosyltransferase from Pseudomonas fluorescens (strain Pf0-1).